The following is a 293-amino-acid chain: Movement protein BC1 (293 aa).

This sequence belongs to the begomovirus movement protein BC1 family. Binds to dimeric supercoiled plasmid DNA. Phosphorylated.

The protein localises to the host cell membrane. The protein resides in the host microsome membrane. It is found in the host endoplasmic reticulum membrane. Functionally, transports viral genome to neighboring plant cells directly through plasmosdesmata, without any budding. The movement protein allows efficient cell to cell propagation, by bypassing the host cell wall barrier. Begomovirus genome is shuttled out of nucleus by Nuclear shuttle protein (NSP) and the movement protein transports the DNA-NSP complex to cell plasmodesmata and facilitates further movement across the cell wall. The sequence is that of Movement protein BC1 from Cucurbita moschata (Winter crookneck squash).